The primary structure comprises 258 residues: MLILISPAKTLDYQSPLTTTRYTLPELLDNSQQLIHEARKLTPPQISTLMRISDKLAGINAARFHDWQPDFTPENARQAILAFKGDVYTGLQAETFSEDDFDFAQQHLRMLSGLYGVLRPLDLMQPYRLEMGIRLENARGKDLYQFWGDIITNKLNEALAAQGDNVVINLASDEYFKSVKPKKLNAEIIKPVFLDEKNGKFKIISFYAKKARGLMSRFIIENRLTKPEQLTGFNSEGYFFDEASSSNGELVFKRYEQR.

Belongs to the UPF0246 family.

In Escherichia coli O157:H7, this protein is UPF0246 protein YaaA.